A 545-amino-acid polypeptide reads, in one-letter code: Adenine deaminase (545 aa).

Belongs to the metallo-dependent hydrolases superfamily. Adenine deaminase family. It depends on Mn(2+) as a cofactor.

The catalysed reaction is adenine + H2O + H(+) = hypoxanthine + NH4(+). This chain is Adenine deaminase, found in Parabacteroides distasonis (strain ATCC 8503 / DSM 20701 / CIP 104284 / JCM 5825 / NCTC 11152).